Consider the following 80-residue polypeptide: Putative membrane protein insertion efficiency factor (80 aa).

This sequence belongs to the UPF0161 family.

It localises to the cell inner membrane. In terms of biological role, could be involved in insertion of integral membrane proteins into the membrane. This Picosynechococcus sp. (strain ATCC 27264 / PCC 7002 / PR-6) (Agmenellum quadruplicatum) protein is Putative membrane protein insertion efficiency factor.